The sequence spans 51 residues: Large ribosomal subunit protein eL39 (51 aa).

This sequence belongs to the eukaryotic ribosomal protein eL39 family.

In Pyrobaculum neutrophilum (strain DSM 2338 / JCM 9278 / NBRC 100436 / V24Sta) (Thermoproteus neutrophilus), this protein is Large ribosomal subunit protein eL39.